The primary structure comprises 1295 residues: Serine protease sat autotransporter (1295 aa).

Residues 1–49 (MNKIYSLKYSAATGGLIAVSELAKRVSGKTNRKLVATMLSLAVAGTVNA) form the signal peptide. Residues 51-300 (NIDISNVWAR…TKYNDKLVSE (250 aa)) enclose the Peptidase S6 domain. Catalysis depends on charge relay system residues His-121, Asp-149, and Ser-256. The Autotransporter domain occupies 1029–1295 (DINGESGAWA…AINANFRYSF (267 aa)).

Post-translationally, cleaved to release the mature protein from the outer membrane.

The protein resides in the periplasm. Its subcellular location is the secreted. It is found in the cell surface. It localises to the cell outer membrane. With respect to regulation, inhibited by phenylmethylsulfonyl fluoride and Pefabloc. Shows serine protease activity and displays cytophatic activity, including elongation, rounding, and detachment of a proportion of the cells from monolayer in culture. Triggers vacuolation within the cytoplasm of the human bladder and kidney cells. In Escherichia coli O6:H1 (strain CFT073 / ATCC 700928 / UPEC), this protein is Serine protease sat autotransporter (sat).